Reading from the N-terminus, the 378-residue chain is Acetylornithine deacetylase (378 aa).

Position 76 (histidine 76) interacts with Zn(2+). The active site involves aspartate 78. Aspartate 108 contacts Zn(2+). The active site involves glutamate 140. Zn(2+) is bound by residues glutamate 141, glutamate 165, and histidine 351.

It belongs to the peptidase M20A family. ArgE subfamily. As to quaternary structure, homodimer. Requires Zn(2+) as cofactor. The cofactor is Co(2+). Glutathione is required as a cofactor.

It is found in the cytoplasm. It catalyses the reaction N(2)-acetyl-L-ornithine + H2O = L-ornithine + acetate. The protein operates within amino-acid biosynthesis; L-arginine biosynthesis; L-ornithine from N(2)-acetyl-L-ornithine (linear): step 1/1. Catalyzes the hydrolysis of the amide bond of N(2)-acetylated L-amino acids. Cleaves the acetyl group from N-acetyl-L-ornithine to form L-ornithine, an intermediate in L-arginine biosynthesis pathway, and a branchpoint in the synthesis of polyamines. The polypeptide is Acetylornithine deacetylase (Aliivibrio fischeri (strain MJ11) (Vibrio fischeri)).